The primary structure comprises 274 residues: uncharacterized protein (274 aa).

5 helical membrane-spanning segments follow: residues 9–29, 64–84, 135–155, 165–185, and 219–239; these read SLLL…VSIL, WFWH…FFIL, LAGH…ALLL, MSSM…WQNA, and IIVY…LVLG.

This sequence belongs to the steroid 5-alpha reductase family.

It is found in the endoplasmic reticulum membrane. This is an uncharacterized protein from Schizosaccharomyces pombe (strain 972 / ATCC 24843) (Fission yeast).